Here is a 378-residue protein sequence, read N- to C-terminus: Cyclic di-GMP phosphodiesterase response regulator RpfG (378 aa).

One can recognise a Response regulatory domain in the interval 29–147 (NIVIVDDQMS…ELRARCSNLL (119 aa)). Residue aspartate 80 is modified to 4-aspartylphosphate. The HD-GYP domain occupies 174 to 371 (VEERERETLS…LEQICGQFST (198 aa)).

Interacts with a subset of GGDEF domain-containing proteins. Phosphorylated and activated by RpfC.

It is found in the cytoplasm. The catalysed reaction is 3',3'-c-di-GMP + 2 H2O = 2 GMP + 2 H(+). Member of the two-component regulatory system RpfG/RpfC, which is involved in the perception and response to the diffusible signaling factor (DSF), which is essential for cell-cell signaling. Detection of DSF leads to the positive regulation of biofilm dispersal and the production of virulence factors. Activated RpfG degrades cyclic di-GMP to GMP, leading to the activation of Clp, a global transcriptional regulator that regulates a large set of genes in DSF pathway. May also directly control genes involved in biofilm dispersal. This is Cyclic di-GMP phosphodiesterase response regulator RpfG (rpfG) from Xanthomonas campestris pv. campestris (strain 8004).